Reading from the N-terminus, the 147-residue chain is Small ribosomal subunit protein uS12 (147 aa).

The protein belongs to the universal ribosomal protein uS12 family. In terms of assembly, part of the 30S ribosomal subunit.

With S4 and S5 plays an important role in translational accuracy. Located at the interface of the 30S and 50S subunits. The polypeptide is Small ribosomal subunit protein uS12 (Ignicoccus hospitalis (strain KIN4/I / DSM 18386 / JCM 14125)).